Here is a 114-residue protein sequence, read N- to C-terminus: MAGLKVRKGDTVQVIAGKDRGTKGKVIAAFPREQKLLVEGVNRVRRHTKVTATTRGSKTGGIITKEAPIHVSNVMVVCPECEKPTRLGRRQDVVDASTGKTRPVRICKRCGKEI.

Belongs to the universal ribosomal protein uL24 family. In terms of assembly, part of the 50S ribosomal subunit.

Functionally, one of two assembly initiator proteins, it binds directly to the 5'-end of the 23S rRNA, where it nucleates assembly of the 50S subunit. In terms of biological role, one of the proteins that surrounds the polypeptide exit tunnel on the outside of the subunit. In Acidothermus cellulolyticus (strain ATCC 43068 / DSM 8971 / 11B), this protein is Large ribosomal subunit protein uL24.